A 443-amino-acid polypeptide reads, in one-letter code: Monooxygenase asqM (443 aa).

Belongs to the aromatic-ring hydroxylase family. FAD is required as a cofactor.

It functions in the pathway secondary metabolite biosynthesis. It participates in alkaloid biosynthesis. The protein operates within mycotoxin biosynthesis. Functionally, monooxygenase; part of the gene cluster that mediates the biosynthesis of the aspoquinolone mycotoxins. The role of asqM within the aspoquinolone pathway has still to be determined. The first step of the pathway is catalyzed by the nonribosomal peptide synthetase asqK that condenses anthranilic acid and O-methyl-L-tyrosine to produce 4'-methoxycyclopeptin. 4'-methoxycyclopeptin is then converted to 4'-methoxydehydrocyclopeptin by the ketoglutarate-dependent dioxygenase asqJ. AsqJ also converts its first product 4'-methoxydehydrocyclopeptin to 4'-methoxycyclopenin. The following conversion of 4'-methoxycyclopenin into 4'-methoxyviridicatin is catalyzed by the cyclopenase asqI. 4'-methoxyviridicatin is the precursor of quinolone natural products, and is further converted to quinolinone B. The prenyltransferase asqH1 then catalyzes the canonical Friedel-Crafts alkylation of quinolinone B with dimethylallyl cation to yield dimethylallyl quinolone, which is subjected to FAD-dependent dehydrogenation by the FAD-linked oxidoreductase asqF to yield conjugated aryl diene. The delta(3') double bond then serves as the site of the second alkylation with DMAPP catalyzed by the prenyltransferase asqH2 to yield a carbenium ion intermediate, which can be attacked by H(2)O to yield a styrenyl quinolone containing a C3'-hydroxyprenyl chain. The FAD-dependent monooxygenase asqG performs epoxidation of the terminal C7'-C8' olefin. Finally, after dehydratation of the epoxide at C3 by asqC, the quinolone epoxide rearrangement protein asqO catalyzes an enzymatic 3-exo-tet cyclization to yield the cyclopropyl-THF ring system in aspoquinolone. The chain is Monooxygenase asqM from Emericella nidulans (strain FGSC A4 / ATCC 38163 / CBS 112.46 / NRRL 194 / M139) (Aspergillus nidulans).